The following is a 371-amino-acid chain: Protein MxiG (371 aa).

Residues 127–141 form a helical membrane-spanning segment; the sequence is VFFFFAVIVVLIIIF.

Its subcellular location is the cell inner membrane. It localises to the cell outer membrane. Functionally, involved in the secretion of the Ipa antigens. Involved in the intracellular dissemination of Shigella. Part of the Mxi-Spa secretion apparatus. In Shigella flexneri, this protein is Protein MxiG (mxiG).